We begin with the raw amino-acid sequence, 805 residues long: MAVDKKRKNTKAPASGPKRRKTQPSSKQIKRPVSVDALAWKTVDIPEMFDDAEGFFGLEEITGVDIVKDGDVVKFMAAVPKSEAEVEDDGEEFGGFDDEETPKPAGNADQEVKTSETKAEAASTPAKEKKASKDQRKPKEQQKQQKQQKQQPKKEQPNKAANKKNAEDKKKARKNEKTTVEPKDPELETDLFTKLEELPEPEEEEIDMSEWVPLDLSPRMISSIAKLRFSKPTVIQSKAIPEIMAGHDVIGKASTGSGKTLAFGIPVIESWLSAAETRKQNKEERKGATALILSPTRELAQQIRDHLQALCKGLPTAPYICSVLGGMAVQKQKRQLQVADIVIATPGRMWEVMSSDNSVLASLRNISFLVLDEADRLLKDGHFKEAEEIFKALDRPPVEENNEDQKMGGTDEEGQEEEEEDSEEEEEEEEEHVNKRQTLIFSATFNKNLQQKLAGKSKFKATSTQDMEYLLQKLNFRETPKFVDANPVHQMAENLKEGLIMCGDMEKDLYLYATLMLQPTRRALVFTNSVNSVRRLTPLLENLNLPAFPLHSGMIQQARLRSIDRFKANEGAKKKNGSAAILVATDVAARGLDIPDVDLVIHYHVPRAAEDYVHRSGRTARASNSGTSILLCGPKEAVPTQRLVAKVHAQAEVKAGNSGNNTKKLVSSGLRTIDIDRRIVAKLRERVDLAKKIADAVQAKTMGGKEDDWMKKAAEDLGVDYDSEELEKAGKWGGKGSSKKQKQKEAQQMSKGELASLRAALRDLLSKRINTGVSERYLTGLDVSELLKGEQGLFLGQVDGLGLDD.

A compositionally biased stretch (basic residues) spans 1-10 (MAVDKKRKNT). Disordered regions lie at residues 1-33 (MAVD…KRPV) and 79-189 (VPKS…ELET). Acidic residues predominate over residues 85 to 100 (EVEDDGEEFGGFDDEE). Basic and acidic residues-rich tracts occupy residues 110–119 (QEVKTSETKA), 126–143 (AKEK…EQQK), and 164–189 (KNAE…ELET). Positions 209–237 (SEWVPLDLSPRMISSIAKLRFSKPTVIQS) match the Q motif motif. Residues 240–463 (IPEIMAGHDV…AGKSKFKATS (224 aa)) enclose the Helicase ATP-binding domain. Position 253–260 (253–260 (ASTGSGKT)) interacts with ATP. The short motif at 372–375 (DEAD) is the DEAD box element. The segment covering 390–406 (FKALDRPPVEENNEDQK) has biased composition (basic and acidic residues). The disordered stretch occupies residues 390–435 (FKALDRPPVEENNEDQKMGGTDEEGQEEEEEDSEEEEEEEEEHVNK). Residues 410–431 (TDEEGQEEEEEDSEEEEEEEEE) are compositionally biased toward acidic residues. The region spanning 510–666 (YLYATLMLQP…NSGNNTKKLV (157 aa)) is the Helicase C-terminal domain. A disordered region spans residues 729–751 (AGKWGGKGSSKKQKQKEAQQMSK).

Belongs to the DEAD box helicase family. DDX24/MAK5 subfamily.

It is found in the nucleus. It localises to the nucleolus. It carries out the reaction ATP + H2O = ADP + phosphate + H(+). Its function is as follows. ATP-binding RNA helicase involved in the biogenesis of 60S ribosomal subunits and is required for the normal formation of 25S and 5.8S rRNAs. This is ATP-dependent RNA helicase mak-5 (mak-5) from Neurospora crassa (strain ATCC 24698 / 74-OR23-1A / CBS 708.71 / DSM 1257 / FGSC 987).